The sequence spans 393 residues: Phosphoenolpyruvate/phosphate translocator 3, chloroplastic (393 aa).

The transit peptide at 1–65 directs the protein to the chloroplast; sequence MQRAAAASRA…LSGGRAVTAR (65 aa). Helical transmembrane passes span 89-109, 124-144, 164-183, 195-217, 232-249, 270-290, and 362-382; these read LAET…NIYF, YTIT…MWAL, AAGH…KVAV, FFTV…LGSL, LSFN…NLLY, INLF…LMLF, and TPIS…VFLY. Residues 123–228 form the EamA domain; that stretch reads PYTITAFQLA…PIVGGVALAS (106 aa).

This sequence belongs to the TPT transporter family. PPT (TC 2.A.7.9) subfamily.

The protein resides in the plastid. It localises to the chloroplast membrane. Its function is as follows. Phosphoenolpyruvate/phosphate translocator that transports phosphoenolpyruvate (PEP) and dihydroxyacetone phosphate. The chain is Phosphoenolpyruvate/phosphate translocator 3, chloroplastic (PPT3) from Oryza sativa subsp. japonica (Rice).